A 625-amino-acid chain; its full sequence is Pyriculol/pyriculariol biosynthesis cluster transcription factor 1 (625 aa).

Disordered regions lie at residues 1-83 (MATE…ATQD) and 466-496 (PMSA…LPAS). Low complexity predominate over residues 46–59 (TPSPSTPANPNSAS). Positions 73–132 (KNQKRQRATQDQLTTLEQEFAKNPTPTATVRDRIAEEINMTERSVQIWFQNRRAKIKLMA) form a DNA-binding region, homeobox. Residues 467–496 (MSATTAPSPSEYNSPSFFSQAPENTPLPAS) show a composition bias toward polar residues.

It is found in the nucleus. In terms of biological role, transcriptional regulator; part of the gene cluster that mediates the biosynthesis of pyriculol and pyriculariol, two heptaketides that induce lesion formation upon application on rice leaves but are dispensable for pathogenicity. With TRF1, negatively regulates the expression of the gene cluster and the subsequent pyriculol and pyriculariol production. The chain is Pyriculol/pyriculariol biosynthesis cluster transcription factor 1 from Pyricularia oryzae (strain 70-15 / ATCC MYA-4617 / FGSC 8958) (Rice blast fungus).